A 437-amino-acid polypeptide reads, in one-letter code: GTPase Der (437 aa).

2 EngA-type G domains span residues 3–167 (NIVA…TKKV) and 176–352 (PAIA…DIRQ). GTP is bound by residues 9-16 (GRPNVGKS), 56-60 (DTGGW), 119-122 (NKAD), 182-189 (GKPNVGKS), 229-233 (DTAGI), and 294-297 (NKWD). Residues 353 to 437 (IKIPTSQLNR…TPINIFMREK (85 aa)) form the KH-like domain.

This sequence belongs to the TRAFAC class TrmE-Era-EngA-EngB-Septin-like GTPase superfamily. EngA (Der) GTPase family. In terms of assembly, associates with the 50S ribosomal subunit.

Its function is as follows. GTPase that plays an essential role in the late steps of ribosome biogenesis. The sequence is that of GTPase Der from Azobacteroides pseudotrichonymphae genomovar. CFP2.